The following is a 210-amino-acid chain: Thymidylate kinase (210 aa).

10 to 17 serves as a coordination point for ATP; the sequence is GPEGAGKS.

The protein belongs to the thymidylate kinase family.

The enzyme catalyses dTMP + ATP = dTDP + ADP. Functionally, phosphorylation of dTMP to form dTDP in both de novo and salvage pathways of dTTP synthesis. The sequence is that of Thymidylate kinase from Pseudomonas paraeruginosa (strain DSM 24068 / PA7) (Pseudomonas aeruginosa (strain PA7)).